The chain runs to 204 residues: LexA repressor (204 aa).

The H-T-H motif DNA-binding region spans 27-47; the sequence is VREIGEAVGLASSSTVHGHLA. Catalysis depends on for autocatalytic cleavage activity residues Ser126 and Lys164.

This sequence belongs to the peptidase S24 family. In terms of assembly, homodimer.

It catalyses the reaction Hydrolysis of Ala-|-Gly bond in repressor LexA.. Functionally, represses a number of genes involved in the response to DNA damage (SOS response), including recA and lexA. In the presence of single-stranded DNA, RecA interacts with LexA causing an autocatalytic cleavage which disrupts the DNA-binding part of LexA, leading to derepression of the SOS regulon and eventually DNA repair. The protein is LexA repressor of Listeria innocua serovar 6a (strain ATCC BAA-680 / CLIP 11262).